The sequence spans 543 residues: Probable ubiquitin-conjugating enzyme E2 26 (543 aa).

The interval Met1 to Arg21 is disordered. Residues Asn271–Val431 enclose the UBC core domain. Cys357 serves as the catalytic Glycyl thioester intermediate. The interval Leu514–Arg543 is disordered. Residues Lys532–Arg543 show a composition bias toward basic residues.

The protein belongs to the ubiquitin-conjugating enzyme family.

The catalysed reaction is S-ubiquitinyl-[E1 ubiquitin-activating enzyme]-L-cysteine + [E2 ubiquitin-conjugating enzyme]-L-cysteine = [E1 ubiquitin-activating enzyme]-L-cysteine + S-ubiquitinyl-[E2 ubiquitin-conjugating enzyme]-L-cysteine.. The protein operates within protein modification; protein ubiquitination. In terms of biological role, accepts the ubiquitin from the E1 complex and catalyzes its covalent attachment to other proteins. In Arabidopsis thaliana (Mouse-ear cress), this protein is Probable ubiquitin-conjugating enzyme E2 26 (UBC26).